The sequence spans 179 residues: tRNA-splicing endonuclease (179 aa).

Active-site residues include tyrosine 115, histidine 125, and lysine 156.

Belongs to the tRNA-intron endonuclease family. Archaeal short subfamily. In terms of assembly, homotetramer; although the tetramer contains four active sites, only two participate in the cleavage. Therefore, it should be considered as a dimer of dimers.

The catalysed reaction is pretRNA = a 3'-half-tRNA molecule with a 5'-OH end + a 5'-half-tRNA molecule with a 2',3'-cyclic phosphate end + an intron with a 2',3'-cyclic phosphate and a 5'-hydroxyl terminus.. Its function is as follows. Endonuclease that removes tRNA introns. Cleaves pre-tRNA at the 5'- and 3'-splice sites to release the intron. The products are an intron and two tRNA half-molecules bearing 2',3' cyclic phosphate and 5'-OH termini. Recognizes a pseudosymmetric substrate in which 2 bulged loops of 3 bases are separated by a stem of 4 bp. The chain is tRNA-splicing endonuclease (endA) from Methanocaldococcus jannaschii (strain ATCC 43067 / DSM 2661 / JAL-1 / JCM 10045 / NBRC 100440) (Methanococcus jannaschii).